The sequence spans 131 residues: Synaptobrevin-like protein (131 aa).

Residues 1-81 (MLHITTMTDK…KRKFWWKNCK (81 aa)) are Cytoplasmic-facing. The 61-residue stretch at 18-78 (RLQQTQAQVN…GKLKRKFWWK (61 aa)) folds into the v-SNARE coiled-coil homology domain. Residues 82-102 (MLAVLGVLVVILIIVLIVWVV) form a helical; Anchor for type IV membrane protein membrane-spanning segment. The Vesicular segment spans residues 103–131 (SEQKNKVEQSEHSSHHLVMDNSSHLLSEQ). The tract at residues 112 to 131 (SEHSSHHLVMDNSSHLLSEQ) is disordered. The span at 122-131 (DNSSHLLSEQ) shows a compositional bias: polar residues.

The protein belongs to the synaptobrevin family.

The protein localises to the cytoplasmic vesicle. It is found in the secretory vesicle. The protein resides in the synaptic vesicle membrane. It localises to the synapse. Its subcellular location is the synaptosome. Functionally, unknown, but synaptobrevins are presumed to be involved in targeting and fusion of synaptic vesicles with the presynaptic membrane as well as in neurotransmitter release. This is Synaptobrevin-like protein from Schistosoma mansoni (Blood fluke).